Here is a 512-residue protein sequence, read N- to C-terminus: 2-isopropylmalate synthase (512 aa).

The 264-residue stretch at Leu-5–Val-268 folds into the Pyruvate carboxyltransferase domain. Mn(2+) is bound by residues Asp-14, His-202, His-204, and Asn-239. A regulatory domain region spans residues Gly-394–Gly-512.

The protein belongs to the alpha-IPM synthase/homocitrate synthase family. LeuA type 1 subfamily. As to quaternary structure, homodimer. The cofactor is Mn(2+).

The protein resides in the cytoplasm. The catalysed reaction is 3-methyl-2-oxobutanoate + acetyl-CoA + H2O = (2S)-2-isopropylmalate + CoA + H(+). It participates in amino-acid biosynthesis; L-leucine biosynthesis; L-leucine from 3-methyl-2-oxobutanoate: step 1/4. Its function is as follows. Catalyzes the condensation of the acetyl group of acetyl-CoA with 3-methyl-2-oxobutanoate (2-ketoisovalerate) to form 3-carboxy-3-hydroxy-4-methylpentanoate (2-isopropylmalate). The protein is 2-isopropylmalate synthase of Acidovorax ebreus (strain TPSY) (Diaphorobacter sp. (strain TPSY)).